The following is a 612-amino-acid chain: Zinc metalloproteinase-disintegrin-like 8 (612 aa).

Positions 1–20 (MIQVLLVTICLAVFPYQGSS) are cleaved as a signal peptide. Residues 21–189 (IILGSGNVND…KKASQLNLTP (169 aa)) constitute a propeptide that is removed on maturation. The Peptidase M12B domain occupies 199–395 (KYIELVIVAD…NRPPCILNKP (197 aa)). Residue Glu-202 coordinates Ca(2+). Asn-218 carries an N-linked (GlcNAc...) asparagine glycan. Asp-286 serves as a coordination point for Ca(2+). 3 cysteine pairs are disulfide-bonded: Cys-310–Cys-390, Cys-350–Cys-374, and Cys-352–Cys-357. Residue His-335 coordinates Zn(2+). Glu-336 is a catalytic residue. Zn(2+)-binding residues include His-339 and His-345. Ca(2+) is bound by residues Cys-390, Asn-393, Val-405, Asn-408, Phe-410, Glu-412, Glu-415, and Asp-418. In terms of domain architecture, Disintegrin spans 403 to 489 (PPVCGNYFVE…DCPTDDFQRN (87 aa)). Intrachain disulfides connect Cys-406–Cys-435, Cys-417–Cys-430, Cys-419–Cys-425, Cys-429–Cys-452, Cys-443–Cys-449, Cys-448–Cys-474, Cys-461–Cys-481, Cys-468–Cys-500, Cys-493–Cys-505, Cys-512–Cys-562, Cys-527–Cys-573, Cys-540–Cys-550, Cys-557–Cys-599, and Cys-593–Cys-605. Residues 467 to 469 (ECD) carry the D/ECD-tripeptide motif. Asn-502 is a glycosylation site (N-linked (GlcNAc...) asparagine).

The protein belongs to the venom metalloproteinase (M12B) family. P-III subfamily. It depends on Zn(2+) as a cofactor. In terms of tissue distribution, expressed by the venom gland.

It is found in the secreted. Its function is as follows. Snake venom metalloproteinase that impairs hemostasis in the envenomed animal. The protein is Zinc metalloproteinase-disintegrin-like 8 of Crotalus adamanteus (Eastern diamondback rattlesnake).